The primary structure comprises 1415 residues: DNA-directed RNA polymerase subunit beta' (1415 aa).

Residues cysteine 214, cysteine 294, cysteine 301, and cysteine 304 each contribute to the Zn(2+) site. Residues 1335–1351 are compositionally biased toward polar residues; the sequence is QNFVDSQGKPQSQSSFI. Residues 1335-1390 are disordered; sequence QNFVDSQGKPQSQSSFIDDSMSEFSPVKDKSGSVLDDSDFPPGNFDSDFPADNYDL.

The protein belongs to the RNA polymerase beta' chain family. RpoC2 subfamily. As to quaternary structure, in cyanobacteria the RNAP catalytic core is composed of 2 alpha, 1 beta, 1 beta', 1 gamma and 1 omega subunit. When a sigma factor is associated with the core the holoenzyme is formed, which can initiate transcription. Requires Zn(2+) as cofactor.

The enzyme catalyses RNA(n) + a ribonucleoside 5'-triphosphate = RNA(n+1) + diphosphate. In terms of biological role, DNA-dependent RNA polymerase catalyzes the transcription of DNA into RNA using the four ribonucleoside triphosphates as substrates. This Trichodesmium erythraeum (strain IMS101) protein is DNA-directed RNA polymerase subunit beta'.